The sequence spans 322 residues: Deoxycytidylate deaminase (322 aa).

One can recognise a CMP/dCMP-type deaminase domain in the interval 173 to 311 (SWDSYFMEMA…SLLQAAGVQL (139 aa)). Residue His246 coordinates Zn(2+). Catalysis depends on Glu248, which acts as the Proton donor. Zn(2+)-binding residues include Cys273 and Cys276.

This sequence belongs to the cytidine and deoxycytidylate deaminase family. Zn(2+) is required as a cofactor.

Its subcellular location is the cytoplasm. The protein resides in the nucleus. The catalysed reaction is dCMP + H2O + H(+) = dUMP + NH4(+). Supplies the nucleotide substrate for thymidylate synthetase. The polypeptide is Deoxycytidylate deaminase (Schizosaccharomyces pombe (strain 972 / ATCC 24843) (Fission yeast)).